We begin with the raw amino-acid sequence, 444 residues long: GVGFKAGVKDYRLTHYTPDYETKDTDILAAFRMTPQPGVPAAEAGAAVAAESSTGTWTTVWTDGLTSLDRYKGRCYEIEPVPGEENQFIAYVAYPPDLSEEGSVTNMFTSIVGNVFGFKALRALRLEDSRIPPAYSKTFMGPPHGIQVERDKLNKYGRPLLGCTIKPKLGLSAKNYGRAVYECLRGGLDFTKDDENVNSQPFMRWRDRFLFVAEALFKSQAETGEIKGHYSNATAGTCEEMLKRAVFARELGVPIVMHDYLTGGFTANTSLAFYCWDNGLLLHIHRAMHAVIDRQKNHGIHFRVLAKALRMSSGDHIHSGTVVGKLEGERDITLGFVDLLRDDYIEKDRSRGIYFTQDWVSMPGVLPVASGGIHVWHMPALTEIFGDDSVLQFGGGTLGHPWGNAPGAVANRVAPEACVQARNEGRDLAREGNETIREAAKWSP.

Residue lysine 5 is modified to N6,N6,N6-trimethyllysine. 2 residues coordinate substrate: asparagine 114 and threonine 164. Lysine 166 (proton acceptor) is an active-site residue. Residue lysine 168 coordinates substrate. Mg(2+) is bound by residues lysine 192, aspartate 194, and glutamate 195. An N6-carboxylysine modification is found at lysine 192. The active-site Proton acceptor is histidine 285. Substrate-binding residues include arginine 286, histidine 318, and serine 370.

This sequence belongs to the RuBisCO large chain family. Type I subfamily. Heterohexadecamer of 8 large chains and 8 small chains; disulfide-linked. The disulfide link is formed within the large subunit homodimers. Mg(2+) is required as a cofactor. Post-translationally, the disulfide bond which can form in the large chain dimeric partners within the hexadecamer appears to be associated with oxidative stress and protein turnover.

It localises to the plastid. Its subcellular location is the chloroplast. It carries out the reaction 2 (2R)-3-phosphoglycerate + 2 H(+) = D-ribulose 1,5-bisphosphate + CO2 + H2O. The enzyme catalyses D-ribulose 1,5-bisphosphate + O2 = 2-phosphoglycolate + (2R)-3-phosphoglycerate + 2 H(+). In terms of biological role, ruBisCO catalyzes two reactions: the carboxylation of D-ribulose 1,5-bisphosphate, the primary event in carbon dioxide fixation, as well as the oxidative fragmentation of the pentose substrate in the photorespiration process. Both reactions occur simultaneously and in competition at the same active site. The chain is Ribulose bisphosphate carboxylase large chain from Botrychium strictum (Fern).